The chain runs to 165 residues: Shikimate kinase (165 aa).

12–17 (GCGKST) contacts ATP. S16 is a Mg(2+) binding site. Substrate contacts are provided by D34, R57, and G79. Residue R116 coordinates ATP. R133 contributes to the substrate binding site.

It belongs to the shikimate kinase family. In terms of assembly, monomer. It depends on Mg(2+) as a cofactor.

It localises to the cytoplasm. The catalysed reaction is shikimate + ATP = 3-phosphoshikimate + ADP + H(+). It participates in metabolic intermediate biosynthesis; chorismate biosynthesis; chorismate from D-erythrose 4-phosphate and phosphoenolpyruvate: step 5/7. Functionally, catalyzes the specific phosphorylation of the 3-hydroxyl group of shikimic acid using ATP as a cosubstrate. The chain is Shikimate kinase from Clostridium botulinum (strain Eklund 17B / Type B).